We begin with the raw amino-acid sequence, 300 residues long: ESX-5 secretion-associated protein EspG5 (300 aa).

Belongs to the EspG family. As to quaternary structure, interacts specifically with ESX-5-dependent PE/PPE proteins. Binds PPE33 and PPE18. Does not interact with EsxN. Monomer in solution.

Its subcellular location is the cytoplasm. Specific chaperone for cognate PE/PPE proteins. Plays an important role in preventing aggregation of PE/PPE dimers. Required for LipY and PE31/PPE18 secretion. The sequence is that of ESX-5 secretion-associated protein EspG5 from Mycobacterium marinum (strain ATCC BAA-535 / M).